Here is a 450-residue protein sequence, read N- to C-terminus: Probable ECA polymerase (450 aa).

11 consecutive transmembrane segments (helical) span residues 6–26 (FSGL…LTWF), 37–57 (VFFS…TSVL), 63–83 (VGVA…CFYA), 118–138 (VILM…NGFL), 155–175 (GVAL…VYFL), 181–201 (AWLF…MIVG), 207–227 (IIIA…ISLW), 228–248 (MLAA…LKRY), 341–361 (LVVM…GLII), 378–398 (YKAA…IVLA), and 410–430 (VFFI…YWLF).

The protein belongs to the WzyE family. Probably part of a complex composed of WzxE, WzyE and WzzE.

It is found in the cell inner membrane. The protein operates within bacterial outer membrane biogenesis; enterobacterial common antigen biosynthesis. Functionally, probably involved in the polymerization of enterobacterial common antigen (ECA) trisaccharide repeat units. In Shigella boydii serotype 18 (strain CDC 3083-94 / BS512), this protein is Probable ECA polymerase.